Here is a 501-residue protein sequence, read N- to C-terminus: ATP synthase subunit alpha (501 aa).

Position 169–176 (169–176) interacts with ATP; that stretch reads GDRQTGKT.

This sequence belongs to the ATPase alpha/beta chains family. F-type ATPases have 2 components, CF(1) - the catalytic core - and CF(0) - the membrane proton channel. CF(1) has five subunits: alpha(3), beta(3), gamma(1), delta(1), epsilon(1). CF(0) has three main subunits: a(1), b(2) and c(9-12). The alpha and beta chains form an alternating ring which encloses part of the gamma chain. CF(1) is attached to CF(0) by a central stalk formed by the gamma and epsilon chains, while a peripheral stalk is formed by the delta and b chains.

The protein resides in the cell inner membrane. The catalysed reaction is ATP + H2O + 4 H(+)(in) = ADP + phosphate + 5 H(+)(out). Its function is as follows. Produces ATP from ADP in the presence of a proton gradient across the membrane. The alpha chain is a regulatory subunit. The polypeptide is ATP synthase subunit alpha (Campylobacter jejuni subsp. doylei (strain ATCC BAA-1458 / RM4099 / 269.97)).